The primary structure comprises 369 residues: Superinfection exclusion protein (369 aa).

The signal sequence occupies residues 1-15; sequence MIALLILSLTCSVST.

It belongs to the serpin family. Orthopoxvirus OPG040 subfamily. In terms of assembly, interacts with A56 protein.

It localises to the virion membrane. Its subcellular location is the host cell membrane. In terms of biological role, prevents cell to cell fusion via its interaction with A56 protein. The A56-K2 complex associates with components of the entry fusion complex (EFC) presumably to avoid superinfection and syncytium formation. The protein is Superinfection exclusion protein (OPG040) of Vaccinia virus (strain Copenhagen) (VACV).